A 174-amino-acid polypeptide reads, in one-letter code: UPF0398 protein LACR_0544 (174 aa).

Belongs to the UPF0398 family.

The polypeptide is UPF0398 protein LACR_0544 (Lactococcus lactis subsp. cremoris (strain SK11)).